We begin with the raw amino-acid sequence, 249 residues long: UDP-N-acetyl-D-mannosaminuronic acid transferase (249 aa).

This sequence belongs to the glycosyltransferase 26 family.

It carries out the reaction UDP-N-acetyl-alpha-D-mannosaminouronate + N-acetyl-alpha-D-glucosaminyl-di-trans,octa-cis-undecaprenyl diphosphate = beta-D-ManNAcA-(1-&gt;4)-alpha-D-GlcNAc-di-trans,octa-cis-undecaprenyl diphosphate + UDP + H(+). It participates in bacterial outer membrane biogenesis; enterobacterial common antigen biosynthesis. In terms of biological role, catalyzes the synthesis of Und-PP-GlcNAc-ManNAcA (Lipid II), the second lipid-linked intermediate involved in enterobacterial common antigen (ECA) synthesis. This Pectobacterium atrosepticum (strain SCRI 1043 / ATCC BAA-672) (Erwinia carotovora subsp. atroseptica) protein is UDP-N-acetyl-D-mannosaminuronic acid transferase.